Here is a 158-residue protein sequence, read N- to C-terminus: Phosphopantetheine adenylyltransferase (158 aa).

S9 is a substrate binding site. ATP-binding positions include 9-10 (SF) and H17. K41, T73, and R87 together coordinate substrate. Residues 88–90 (GLR), E98, and 122–128 (NQNISSS) contribute to the ATP site.

Belongs to the bacterial CoaD family. Homohexamer. The cofactor is Mg(2+).

It localises to the cytoplasm. The catalysed reaction is (R)-4'-phosphopantetheine + ATP + H(+) = 3'-dephospho-CoA + diphosphate. Its pathway is cofactor biosynthesis; coenzyme A biosynthesis; CoA from (R)-pantothenate: step 4/5. In terms of biological role, reversibly transfers an adenylyl group from ATP to 4'-phosphopantetheine, yielding dephospho-CoA (dPCoA) and pyrophosphate. This is Phosphopantetheine adenylyltransferase from Leuconostoc citreum (strain KM20).